A 371-amino-acid polypeptide reads, in one-letter code: Protein IQ-DOMAIN 7 (371 aa).

A disordered region spans residues 1–32; the sequence is MGGSGNWIRSLISNRKPVNDQQEKLSDKSSKK. Residues 17–29 are compositionally biased toward basic and acidic residues; it reads PVNDQQEKLSDKS. 2 IQ domains span residues 93–121 and 122–144; these read REWA…AVVR and IQAI…CMQA. Positions 125 to 141 are calmodulin-binding; sequence IFRGRQVRKQAAVTLRC. Disordered regions lie at residues 285–308 and 327–371; these read SGMS…PVAF and LTQS…SQRS. 2 stretches are compositionally biased toward polar residues: residues 297–308 and 327–341; these read STSSTSQSPVAF and LTQS…SGLS.

The protein belongs to the IQD family. Binds to multiple calmodulin (CaM) in the presence of Ca(2+) and CaM-like proteins.

It localises to the nucleus. Its subcellular location is the nucleus envelope. It is found in the cytoplasm. The protein localises to the cytoskeleton. Functionally, may be involved in cooperative interactions with calmodulins or calmodulin-like proteins. Recruits calmodulin proteins to microtubules, thus being a potential scaffold in cellular signaling and trafficking. May associate with nucleic acids and regulate gene expression at the transcriptional or post-transcriptional level. This Arabidopsis thaliana (Mouse-ear cress) protein is Protein IQ-DOMAIN 7.